Reading from the N-terminus, the 467-residue chain is Light-independent protochlorophyllide reductase subunit N (467 aa).

[4Fe-4S] cluster-binding residues include Cys-22, Cys-47, and Cys-107.

Belongs to the BchN/ChlN family. In terms of assembly, protochlorophyllide reductase is composed of three subunits; ChlL, ChlN and ChlB. Forms a heterotetramer of two ChlB and two ChlN subunits. It depends on [4Fe-4S] cluster as a cofactor.

The protein localises to the plastid. Its subcellular location is the chloroplast. The catalysed reaction is chlorophyllide a + oxidized 2[4Fe-4S]-[ferredoxin] + 2 ADP + 2 phosphate = protochlorophyllide a + reduced 2[4Fe-4S]-[ferredoxin] + 2 ATP + 2 H2O. The protein operates within porphyrin-containing compound metabolism; chlorophyll biosynthesis (light-independent). In terms of biological role, component of the dark-operative protochlorophyllide reductase (DPOR) that uses Mg-ATP and reduced ferredoxin to reduce ring D of protochlorophyllide (Pchlide) to form chlorophyllide a (Chlide). This reaction is light-independent. The NB-protein (ChlN-ChlB) is the catalytic component of the complex. This is Light-independent protochlorophyllide reductase subunit N from Pinus thunbergii (Japanese black pine).